Reading from the N-terminus, the 171-residue chain is S-ribosylhomocysteine lyase (171 aa).

The Fe cation site is built by H54, H58, and C128.

This sequence belongs to the LuxS family. Homodimer. It depends on Fe cation as a cofactor.

It catalyses the reaction S-(5-deoxy-D-ribos-5-yl)-L-homocysteine = (S)-4,5-dihydroxypentane-2,3-dione + L-homocysteine. In terms of biological role, involved in the synthesis of autoinducer 2 (AI-2) which is secreted by bacteria and is used to communicate both the cell density and the metabolic potential of the environment. The regulation of gene expression in response to changes in cell density is called quorum sensing. Catalyzes the transformation of S-ribosylhomocysteine (RHC) to homocysteine (HC) and 4,5-dihydroxy-2,3-pentadione (DPD). This Salmonella arizonae (strain ATCC BAA-731 / CDC346-86 / RSK2980) protein is S-ribosylhomocysteine lyase.